We begin with the raw amino-acid sequence, 687 residues long: Protein-glutamine gamma-glutamyltransferase 2 (687 aa).

An N-acetylalanine modification is found at Ala-2. 2 cysteine pairs are disulfide-bonded: Cys-230/Cys-370 and Cys-370/Cys-371. Active-site residues include Cys-277, His-335, and Asp-358. The Ca(2+) site is built by Asn-398, Asp-400, Glu-437, Glu-447, and Glu-452. Lys-468 is modified (N6-acetyllysine). GTP is bound at residue 476-483 (RIRVGEGM). Glu-539 provides a ligand contact to Ca(2+). 580–583 (RDIY) contacts GTP. Gln-633 is covalently cross-linked (Isoglutamyl lysine isopeptide (Gln-Lys) (interchain with K-?)).

It belongs to the transglutaminase superfamily. Transglutaminase family. Monomer. Interacts with phospholipase C; promoting alpha-1 adrenergic receptor signaling. Interacts with PLCD1. The cofactor is Ca(2+). Post-translationally, disulfide bond formation inactivates the calcium-dependent acyltransferase activity. Cys-370 can form disulfide bonds with both Cys-230 and Cys-371: formation of a disulfide bond between Cys-230 and Cys-370 facilitates formation of the disulfide between Cys-370 and Cys-371, which promotes inactivation of the acyltransferase activity. May also form interchain disulfids between Cys-230 and Cys-370. Ca(2+) protects against disulfide bond formation and inactivation. In terms of processing, auto-transglutaminated: Forms covalent cross-links mediated by transglutaminase between Gln-633 and the epsilon-amino group of a lysine residue of itself or HMGB1, forming homopolymers and heteropolymers, respectively. S-nitrosylated, leading to inactivation of the acyltransferase activity. In terms of tissue distribution, highest levels are detected in the lung. Lower levels are found in the liver, spleen and heart, but not in the brain.

The protein localises to the cytoplasm. It is found in the cytosol. It localises to the nucleus. The protein resides in the chromosome. Its subcellular location is the secreted. The protein localises to the extracellular space. It is found in the extracellular matrix. It localises to the cell membrane. The protein resides in the mitochondrion. The catalysed reaction is L-glutaminyl-[protein] + L-lysyl-[protein] = [protein]-L-lysyl-N(6)-5-L-glutamyl-[protein] + NH4(+). It carries out the reaction L-glutaminyl-[protein] + serotonin = 5-serotonyl-L-glutamyl-[protein] + NH4(+). It catalyses the reaction L-glutaminyl-[protein] + dopamine = 5-dopaminyl-L-glutamyl-[protein] + NH4(+). The enzyme catalyses L-glutaminyl-[protein] + histamine = 5-histaminyl-L-glutamyl-[protein] + NH4(+). The catalysed reaction is L-glutaminyl-[protein] + (R)-noradrenaline = 5-(R)-noradrenalinyl-L-glutamyl-[protein] + NH4(+). It carries out the reaction L-glutaminyl-[protein] + H2O = L-glutamyl-[protein] + NH4(+). With respect to regulation, acyltransferase activity is regulated by the binding of GTP and Ca(2+): inactivated by GTP, which stabilizes its closed structure, thereby obstructing the accessibility of substrates to the active sites. In contrast, Ca(2+) acts as a cofactor by inducing conformational change to the active open form. In absence of Ca(2+), Mg(2+) may bind Ca(2+)-binding sites, promoting GTP-binding and subsequent inhibition of the acyltransferase activity. Extracellularly reduced and activated by CLIC3. Its function is as follows. Calcium-dependent acyltransferase that catalyzes the formation of covalent bonds between peptide-bound glutamine and various primary amines, such as gamma-amino group of peptide-bound lysine, or mono- and polyamines, thereby producing cross-linked or aminated proteins, respectively. Involved in many biological processes, such as bone development, angiogenesis, wound healing, cellular differentiation, chromatin modification and apoptosis. Acts as a protein-glutamine gamma-glutamyltransferase by mediating the cross-linking of proteins, such as ACO2, HSPB6, FN1, HMGB1, RAP1GDS1, SLC25A4/ANT1, SPP1 and WDR54. Under physiological conditions, the protein cross-linking activity is inhibited by GTP; inhibition is relieved by Ca(2+) in response to various stresses. When secreted, catalyzes cross-linking of proteins of the extracellular matrix, such as FN1 and SPP1 resulting in the formation of scaffolds. Plays a key role during apoptosis, both by (1) promoting the cross-linking of cytoskeletal proteins resulting in condensation of the cytoplasm, and by (2) mediating cross-linking proteins of the extracellular matrix, resulting in the irreversible formation of scaffolds that stabilize the integrity of the dying cells before their clearance by phagocytosis, thereby preventing the leakage of harmful intracellular components. In addition to protein cross-linking, can use different monoamine substrates to catalyze a vast array of protein post-translational modifications: mediates aminylation of serotonin, dopamine, noradrenaline or histamine into glutamine residues of target proteins to generate protein serotonylation, dopaminylation, noradrenalinylation or histaminylation, respectively. Mediates protein serotonylation of small GTPases during activation and aggregation of platelets, leading to constitutive activation of these GTPases. Plays a key role in chromatin organization by mediating serotonylation and dopaminylation of histone H3. Catalyzes serotonylation of 'Gln-5' of histone H3 (H3Q5ser) during serotonergic neuron differentiation, thereby facilitating transcription. Acts as a mediator of neurotransmission-independent role of nuclear dopamine in ventral tegmental area (VTA) neurons: catalyzes dopaminylation of 'Gln-5' of histone H3 (H3Q5dop), thereby regulating relapse-related transcriptional plasticity in the reward system. Regulates vein remodeling by mediating serotonylation and subsequent inactivation of ATP2A2/SERCA2. Also acts as a protein deamidase by mediating the side chain deamidation of specific glutamine residues of proteins to glutamate. Catalyzes specific deamidation of protein gliadin, a component of wheat gluten in the diet. May also act as an isopeptidase cleaving the previously formed cross-links. Also able to participate in signaling pathways independently of its acyltransferase activity: acts as a signal transducer in alpha-1 adrenergic receptor-mediated stimulation of phospholipase C-delta (PLCD) activity and is required for coupling alpha-1 adrenergic agonists to the stimulation of phosphoinositide lipid metabolism. This Bos taurus (Bovine) protein is Protein-glutamine gamma-glutamyltransferase 2.